We begin with the raw amino-acid sequence, 348 residues long: Uroporphyrinogen decarboxylase (348 aa).

Residues R27–R31, F46, D76, Y152, S207, and H320 contribute to the substrate site.

Belongs to the uroporphyrinogen decarboxylase family. In terms of assembly, homodimer.

Its subcellular location is the cytoplasm. It catalyses the reaction uroporphyrinogen III + 4 H(+) = coproporphyrinogen III + 4 CO2. The protein operates within porphyrin-containing compound metabolism; protoporphyrin-IX biosynthesis; coproporphyrinogen-III from 5-aminolevulinate: step 4/4. In terms of biological role, catalyzes the decarboxylation of four acetate groups of uroporphyrinogen-III to yield coproporphyrinogen-III. The protein is Uroporphyrinogen decarboxylase of Bacillus mycoides (strain KBAB4) (Bacillus weihenstephanensis).